Consider the following 1624-residue polypeptide: Putative serine/threonine-protein kinase/receptor R831 (1624 aa).

The N-terminal stretch at 1-25 (MHSVYTKYTIILILLVIYQGLPTNT) is a signal peptide. 13 N-linked (GlcNAc...) asparagine; by host glycosylation sites follow: Asn-152, Asn-169, Asn-200, Asn-205, Asn-225, Asn-240, Asn-245, Asn-292, Asn-364, Asn-479, Asn-541, Asn-720, and Asn-737. The helical transmembrane segment at 747-767 (VIPIACIFGLLLLTLLIVIIF) threads the bilayer. In terms of domain architecture, Protein kinase 1 spans 786 to 1049 (LEIGETLGTG…EIMTRLSNIL (264 aa)). Residues 792 to 800 (LGTGGYGEV) and Lys-813 contribute to the ATP site. Asp-908 (proton acceptor) is an active-site residue. A compositionally biased stretch (low complexity) spans 1054–1093 (NMTSGTSSSSLSSGGIGKSITDSKSSNSRSSVESSNTSNT). A disordered region spans residues 1054–1101 (NMTSGTSSSSLSSGGIGKSITDSKSSNSRSSVESSNTSNTFRGIDRHN). A Guanylate cyclase domain is found at 1109–1252 (TVAFIDIISA…STVNITGKIT (144 aa)). A Protein kinase 2 domain is found at 1364 to 1615 (ISIGKQIGLG…MTEVVQQLML (252 aa)). Residues 1370–1378 (IGLGSYGIV) and Lys-1391 contribute to the ATP site. Asp-1487 serves as the catalytic Proton acceptor.

It localises to the membrane. It catalyses the reaction L-seryl-[protein] + ATP = O-phospho-L-seryl-[protein] + ADP + H(+). The catalysed reaction is L-threonyl-[protein] + ATP = O-phospho-L-threonyl-[protein] + ADP + H(+). In Acanthamoeba polyphaga (Amoeba), this protein is Putative serine/threonine-protein kinase/receptor R831.